A 485-amino-acid chain; its full sequence is Glutamyl-tRNA(Gln) amidotransferase subunit A (485 aa).

Active-site charge relay system residues include lysine 79 and serine 154. The Acyl-ester intermediate role is filled by serine 178.

This sequence belongs to the amidase family. GatA subfamily. In terms of assembly, heterotrimer of A, B and C subunits.

It carries out the reaction L-glutamyl-tRNA(Gln) + L-glutamine + ATP + H2O = L-glutaminyl-tRNA(Gln) + L-glutamate + ADP + phosphate + H(+). In terms of biological role, allows the formation of correctly charged Gln-tRNA(Gln) through the transamidation of misacylated Glu-tRNA(Gln) in organisms which lack glutaminyl-tRNA synthetase. The reaction takes place in the presence of glutamine and ATP through an activated gamma-phospho-Glu-tRNA(Gln). The protein is Glutamyl-tRNA(Gln) amidotransferase subunit A of Clostridium botulinum (strain Kyoto / Type A2).